We begin with the raw amino-acid sequence, 390 residues long: Putative 2-isopropylmalate synthase (390 aa).

The Pyruvate carboxyltransferase domain maps to Ile-5–Tyr-267. Residues Asp-14, His-202, His-204, and Asn-238 each contribute to the Mn(2+) site.

This sequence belongs to the alpha-IPM synthase/homocitrate synthase family. LeuA type 1 subfamily. Homodimer. The cofactor is Mn(2+).

The protein resides in the cytoplasm. The enzyme catalyses 3-methyl-2-oxobutanoate + acetyl-CoA + H2O = (2S)-2-isopropylmalate + CoA + H(+). The protein operates within amino-acid biosynthesis; L-leucine biosynthesis; L-leucine from 3-methyl-2-oxobutanoate: step 1/4. Its function is as follows. Catalyzes the condensation of the acetyl group of acetyl-CoA with 3-methyl-2-oxobutanoate (2-ketoisovalerate) to form 3-carboxy-3-hydroxy-4-methylpentanoate (2-isopropylmalate). In Buchnera aphidicola subsp. Baizongia pistaciae (strain Bp), this protein is Putative 2-isopropylmalate synthase.